Reading from the N-terminus, the 307-residue chain is tRNA dimethylallyltransferase 1 (307 aa).

10–17 contributes to the ATP binding site; that stretch reads GPTASGKT. 12–17 lines the substrate pocket; sequence TASGKT. The interaction with substrate tRNA stretch occupies residues 35 to 38; the sequence is DSRQ.

The protein belongs to the IPP transferase family. As to quaternary structure, monomer. Requires Mg(2+) as cofactor.

It catalyses the reaction adenosine(37) in tRNA + dimethylallyl diphosphate = N(6)-dimethylallyladenosine(37) in tRNA + diphosphate. Catalyzes the transfer of a dimethylallyl group onto the adenine at position 37 in tRNAs that read codons beginning with uridine, leading to the formation of N6-(dimethylallyl)adenosine (i(6)A). The protein is tRNA dimethylallyltransferase 1 of Geotalea daltonii (strain DSM 22248 / JCM 15807 / FRC-32) (Geobacter daltonii).